The sequence spans 212 residues: Methylthioribulose-1-phosphate dehydratase (212 aa).

2 residues coordinate Zn(2+): His-97 and His-99.

It belongs to the aldolase class II family. MtnB subfamily. As to quaternary structure, homotetramer. Zn(2+) serves as cofactor.

The enzyme catalyses 5-(methylsulfanyl)-D-ribulose 1-phosphate = 5-methylsulfanyl-2,3-dioxopentyl phosphate + H2O. It participates in amino-acid biosynthesis; L-methionine biosynthesis via salvage pathway; L-methionine from S-methyl-5-thio-alpha-D-ribose 1-phosphate: step 2/6. In terms of biological role, catalyzes the dehydration of methylthioribulose-1-phosphate (MTRu-1-P) into 2,3-diketo-5-methylthiopentyl-1-phosphate (DK-MTP-1-P). In Bacillus thuringiensis (strain Al Hakam), this protein is Methylthioribulose-1-phosphate dehydratase.